We begin with the raw amino-acid sequence, 421 residues long: MIEYMNYVIKSLQSNNDYEHLTLSSRSLLNFKIPNAFKFQLSNKSTPYTYNTIDISTNKVINGSITYLYTDAKGLDKLIKDSHNINIQSIVETYNHHCKTLNINKQNVDFKSLYYGRMYYPNSHLEGMIIKKFTTNTQVVLKWVSSFNSCNIITGYFQKYGKRNFQELIVSSNDFLCGYRFLHNFIEQPSKLNNSLYNNSYISLGGEFWLAISTLSPTCATTLRYCTHSATTGRPLTLTLSFNPLFGHLSSTYSAKTSSNSAFCVQYDFNLYSIDSNLSLGCELWKQNELIQNVSQEKSKKQEIQVPPNFYNNNSNDAKQKRILNDLNTTFESSLKKIDKERAVIENFETDLYNKDFTSVWKFSTSLRDKNLCILWDGKFKGFLLSAGTELIRINTNNENNSQSLVKFYPAKLGLQLQFST.

It belongs to the MDM10 family. As to quaternary structure, component of the ER-mitochondria encounter structure (ERMES) or MDM complex, composed of MMM1, MDM10, MDM12 and MDM34. Associates with the mitochondrial outer membrane sorting assembly machinery SAM(core) complex.

The protein localises to the mitochondrion outer membrane. In terms of biological role, component of the ERMES/MDM complex, which serves as a molecular tether to connect the endoplasmic reticulum and mitochondria. Components of this complex are involved in the control of mitochondrial shape and protein biogenesis and may function in phospholipid exchange. MDM10 is involved in the late assembly steps of the general translocase of the mitochondrial outer membrane (TOM complex). Functions in the TOM40-specific route of the assembly of outer membrane beta-barrel proteins, including the association of TOM40 with the receptor TOM22 and small TOM proteins. Can associate with the SAM(core) complex as well as the MDM12-MMM1 complex, both involved in late steps of the major beta-barrel assembly pathway, that is responsible for biogenesis of all outer membrane beta-barrel proteins. May act as a switch that shuttles between both complexes and channels precursor proteins into the TOM40-specific pathway. Plays a role in mitochondrial morphology and in the inheritance of mitochondria. This Vanderwaltozyma polyspora (strain ATCC 22028 / DSM 70294 / BCRC 21397 / CBS 2163 / NBRC 10782 / NRRL Y-8283 / UCD 57-17) (Kluyveromyces polysporus) protein is Mitochondrial distribution and morphology protein 10.